The primary structure comprises 296 residues: Urease accessory protein UreD (296 aa).

Belongs to the UreD family. UreD, UreF and UreG form a complex that acts as a GTP-hydrolysis-dependent molecular chaperone, activating the urease apoprotein by helping to assemble the nickel containing metallocenter of UreC. The UreE protein probably delivers the nickel.

The protein localises to the cytoplasm. Its function is as follows. Required for maturation of urease via the functional incorporation of the urease nickel metallocenter. The chain is Urease accessory protein UreD from Synechococcus sp. (strain CC9311).